Here is a 68-residue protein sequence, read N- to C-terminus: Large ribosomal subunit protein bL35 (68 aa).

Belongs to the bacterial ribosomal protein bL35 family.

In Persephonella marina (strain DSM 14350 / EX-H1), this protein is Large ribosomal subunit protein bL35.